A 249-amino-acid chain; its full sequence is Vacuolar iron transporter 1 (249 aa).

Over 1 to 36 the chain is Cytoplasmic; the sequence is MADGANDGGNPGAEEQQRLLDQHKEAHFTAGEIVRD. Residues 37–57 form a helical membrane-spanning segment; sequence IIIGVSDGLTVPFALAAGLSG. Residues 58–63 are Vacuolar-facing; sequence ANASSS. A helical transmembrane segment spans residues 64 to 84; the sequence is IVLTAGIAEVAAGAISMGLGG. Residues 85-170 lie on the Cytoplasmic side of the membrane; it reads YLAAKSEADN…PKRALQSAFT (86 aa). The cytoplasmic metal binding domain (MBD) stretch occupies residues 90-165; the sequence is SEADNYAREL…LEKPDPKRAL (76 aa). Fe cation-binding residues include Glu102, Glu105, Glu113, Glu116, Met149, and Glu153. Residues 171–191 traverse the membrane as a helical segment; it reads IAIAYVLGGLVPLIPYMFIPV. The Vacuolar portion of the chain corresponds to 192-194; that stretch reads ARK. The chain crosses the membrane as a helical span at residues 195-215; the sequence is AVVASVILTLMALLIFGYAKG. Residues 216–226 lie on the Cytoplasmic side of the membrane; that stretch reads YFTDNKPFKSA. A helical transmembrane segment spans residues 227–247; sequence LQTALIGAIASAAAFGMAKAV. The Vacuolar portion of the chain corresponds to 248–249; it reads QS.

The protein belongs to the CCC1 family. In terms of assembly, homodimer. The dimeric interaction is mediated by both the transmembrane domains (TMDs) and the cytoplasmic metal binding domain (MBD).

Its subcellular location is the vacuole membrane. It carries out the reaction Fe(2+)(in) = Fe(2+)(out). Transport of iron ions is inhibited by zinc ions. Its function is as follows. Vacuolar iron transporter involved in the transfer of iron ions from the cytosol to the vacuole for intracellular iron storage. Can transport cobalt ions from the cytosol to the vacuole. The polypeptide is Vacuolar iron transporter 1 (Eucalyptus grandis (Flooded gum)).